Here is a 206-residue protein sequence, read N- to C-terminus: Small ribosomal subunit protein uS5 (206 aa).

The segment covering 1–23 (MTDTPTKQENQSKTENPPSSNAN) has biased composition (polar residues). A disordered region spans residues 1-52 (MTDTPTKQENQSKTENPPSSNANEQRRGNRNNDRKRNRRGDSKNERDSEWQE). Over residues 24-52 (EQRRGNRNNDRKRNRRGDSKNERDSEWQE) the composition is skewed to basic and acidic residues. Residues 50–113 (WQERVVQIRR…SDGKKHLVRV (64 aa)) form the S5 DRBM domain.

It belongs to the universal ribosomal protein uS5 family. As to quaternary structure, part of the 30S ribosomal subunit. Contacts proteins S4 and S8.

In terms of biological role, with S4 and S12 plays an important role in translational accuracy. Located at the back of the 30S subunit body where it stabilizes the conformation of the head with respect to the body. This Prochlorococcus marinus subsp. pastoris (strain CCMP1986 / NIES-2087 / MED4) protein is Small ribosomal subunit protein uS5.